Here is a 191-residue protein sequence, read N- to C-terminus: NF-kappa-B inhibitor-interacting Ras-like protein 2 (191 aa).

Residues 1–191 are small GTPase-like; the sequence is MGKSCKVVVC…KNKGSGSVDG (191 aa). 11-18 contacts GTP; sequence GQAAVGKT. The Effector region motif lies at 35-43; sequence MIETQEDIY. Residues 61–65 and 120–123 contribute to the GTP site; these read DTRGL and NKCD. Positions 170–191 are disordered; the sequence is QPQSKSAFPLSRKNKGSGSVDG.

The protein belongs to the small GTPase superfamily. Ras family. KappaB-Ras subfamily.

The protein localises to the cytoplasm. Its function is as follows. Atypical Ras-like protein that acts as a potent regulator of NF-kappa-B activity by preventing the degradation of NF-kappa-B inhibitor beta (NFKBIB) by most signals, explaining why NFKBIB is more resistant to degradation. The chain is NF-kappa-B inhibitor-interacting Ras-like protein 2 (NKIRAS2) from Gallus gallus (Chicken).